Here is a 663-residue protein sequence, read N- to C-terminus: Glucans biosynthesis glucosyltransferase H (663 aa).

Helical transmembrane passes span 64 to 86 (WMLGLMTIAMGVAGWKASFDTIA), 101 to 123 (LAPLFLALSLWFCTALIGFVVLM), 413 to 435 (LVIGVLSYALSPLWFFCLSAGLI), 470 to 492 (AWAMIITFVLLFGPKILGAILVL), 558 to 580 (EAWAAMGWISLSGLILAASFWFT), and 584 to 606 (LTATAPILAGLVLAVPLTMLGAH).

Belongs to the glycosyltransferase 2 family. OpgH subfamily.

The protein resides in the cell inner membrane. It participates in glycan metabolism; osmoregulated periplasmic glucan (OPG) biosynthesis. Its function is as follows. Involved in the biosynthesis of osmoregulated periplasmic glucans (OPGs). The chain is Glucans biosynthesis glucosyltransferase H from Caulobacter vibrioides (strain ATCC 19089 / CIP 103742 / CB 15) (Caulobacter crescentus).